Here is a 483-residue protein sequence, read N- to C-terminus: 3-isopropylmalate dehydratase large subunit (483 aa).

[4Fe-4S] cluster-binding residues include C352, C412, and C415.

Belongs to the aconitase/IPM isomerase family. LeuC type 1 subfamily. Heterodimer of LeuC and LeuD. [4Fe-4S] cluster serves as cofactor.

It catalyses the reaction (2R,3S)-3-isopropylmalate = (2S)-2-isopropylmalate. Its pathway is amino-acid biosynthesis; L-leucine biosynthesis; L-leucine from 3-methyl-2-oxobutanoate: step 2/4. Catalyzes the isomerization between 2-isopropylmalate and 3-isopropylmalate, via the formation of 2-isopropylmaleate. This chain is 3-isopropylmalate dehydratase large subunit, found in Paenarthrobacter aurescens (strain TC1).